A 379-amino-acid polypeptide reads, in one-letter code: ATP phosphoribosyltransferase regulatory subunit (379 aa).

The protein belongs to the class-II aminoacyl-tRNA synthetase family. HisZ subfamily. As to quaternary structure, heteromultimer composed of HisG and HisZ subunits.

It localises to the cytoplasm. It functions in the pathway amino-acid biosynthesis; L-histidine biosynthesis; L-histidine from 5-phospho-alpha-D-ribose 1-diphosphate: step 1/9. Functionally, required for the first step of histidine biosynthesis. May allow the feedback regulation of ATP phosphoribosyltransferase activity by histidine. The chain is ATP phosphoribosyltransferase regulatory subunit from Sinorhizobium fredii (strain NBRC 101917 / NGR234).